Consider the following 264-residue polypeptide: Acyl-[acyl-carrier-protein]--UDP-N-acetylglucosamine O-acyltransferase (264 aa).

It belongs to the transferase hexapeptide repeat family. LpxA subfamily. In terms of assembly, homotrimer.

The protein localises to the cytoplasm. It catalyses the reaction a (3R)-hydroxyacyl-[ACP] + UDP-N-acetyl-alpha-D-glucosamine = a UDP-3-O-[(3R)-3-hydroxyacyl]-N-acetyl-alpha-D-glucosamine + holo-[ACP]. Its pathway is glycolipid biosynthesis; lipid IV(A) biosynthesis; lipid IV(A) from (3R)-3-hydroxytetradecanoyl-[acyl-carrier-protein] and UDP-N-acetyl-alpha-D-glucosamine: step 1/6. Its function is as follows. Involved in the biosynthesis of lipid A, a phosphorylated glycolipid that anchors the lipopolysaccharide to the outer membrane of the cell. This Haemophilus ducreyi (strain 35000HP / ATCC 700724) protein is Acyl-[acyl-carrier-protein]--UDP-N-acetylglucosamine O-acyltransferase.